We begin with the raw amino-acid sequence, 487 residues long: Photosystem II CP43 reaction center protein (487 aa).

Residues 1 to 28 (MKVFVLGWLLKINLMKTLYSQRRFYHVE) constitute a propeptide that is removed on maturation. Transmembrane regions (helical) follow at residues 83–107 (LFEV…PHLA), 148–169 (LIGP…RDKN), 192–214 (KSLF…RFVS), 269–289 (KPFA…LSYS), and 305–326 (WYNN…ASQA). Glu381 lines the [CaMn4O5] cluster pocket. The helical transmembrane segment at 461–485 (RARAAAAGFEKGINRENEPVLSMRP) threads the bilayer.

Belongs to the PsbB/PsbC family. PsbC subfamily. As to quaternary structure, PSII is composed of 1 copy each of membrane proteins PsbA, PsbB, PsbC, PsbD, PsbE, PsbF, PsbH, PsbI, PsbJ, PsbK, PsbL, PsbM, PsbT, PsbX, PsbY, PsbZ, Psb30/Ycf12, at least 3 peripheral proteins of the oxygen-evolving complex and a large number of cofactors. It forms dimeric complexes. It depends on Binds multiple chlorophylls and provides some of the ligands for the Ca-4Mn-5O cluster of the oxygen-evolving complex. It may also provide a ligand for a Cl- that is required for oxygen evolution. PSII binds additional chlorophylls, carotenoids and specific lipids. as a cofactor.

Its subcellular location is the plastid. It is found in the chloroplast thylakoid membrane. Functionally, one of the components of the core complex of photosystem II (PSII). It binds chlorophyll and helps catalyze the primary light-induced photochemical processes of PSII. PSII is a light-driven water:plastoquinone oxidoreductase, using light energy to abstract electrons from H(2)O, generating O(2) and a proton gradient subsequently used for ATP formation. The sequence is that of Photosystem II CP43 reaction center protein from Porphyra purpurea (Red seaweed).